Here is a 235-residue protein sequence, read N- to C-terminus: Phosphoribosylaminoimidazole-succinocarboxamide synthase (235 aa).

The protein belongs to the SAICAR synthetase family.

The catalysed reaction is 5-amino-1-(5-phospho-D-ribosyl)imidazole-4-carboxylate + L-aspartate + ATP = (2S)-2-[5-amino-1-(5-phospho-beta-D-ribosyl)imidazole-4-carboxamido]succinate + ADP + phosphate + 2 H(+). The protein operates within purine metabolism; IMP biosynthesis via de novo pathway; 5-amino-1-(5-phospho-D-ribosyl)imidazole-4-carboxamide from 5-amino-1-(5-phospho-D-ribosyl)imidazole-4-carboxylate: step 1/2. This Clostridium botulinum (strain Alaska E43 / Type E3) protein is Phosphoribosylaminoimidazole-succinocarboxamide synthase.